Reading from the N-terminus, the 95-residue chain is UPF0223 protein Bsph_1378 (95 aa).

The protein belongs to the UPF0223 family.

The chain is UPF0223 protein Bsph_1378 from Lysinibacillus sphaericus (strain C3-41).